The sequence spans 389 residues: COP9 signalosome complex subunit 11 (389 aa).

In terms of domain architecture, PCI spans 143–312; sequence QLIIDIPNLV…ILYQKFDPQM (170 aa).

Component of a COP9 signalosome-like (CSN) complex.

The protein resides in the cytoplasm. Its subcellular location is the nucleus. Functionally, component of the COP9 signalosome (CSN) complex that acts as an regulator of the ubiquitin (Ubl) conjugation pathway by mediating the deneddylation of the cullin subunit of SCF-type E3 ubiquitin-protein ligase complexes The CSN complex is involved in the regulation of the mating pheromone response. PCI8 may also be involved in transcriptional and translational control. The chain is COP9 signalosome complex subunit 11 (PCI8) from Kluyveromyces lactis (strain ATCC 8585 / CBS 2359 / DSM 70799 / NBRC 1267 / NRRL Y-1140 / WM37) (Yeast).